The sequence spans 1058 residues: Carbamoyl phosphate synthase large chain (1058 aa).

Positions 1 to 401 (MSKRKDIQKI…SLLKACRSLE (401 aa)) are carboxyphosphate synthetic domain. Residues Arg-129, Arg-169, Gly-175, Gly-176, Arg-208, Ile-210, Glu-215, Gly-241, Ile-242, His-243, Gln-284, and Glu-298 each contribute to the ATP site. The region spanning 133 to 327 (KQLMQELDQP…IAKLAAKIAV (195 aa)) is the ATP-grasp 1 domain. Gln-284, Glu-298, and Asn-300 together coordinate Mg(2+). Mn(2+) is bound by residues Gln-284, Glu-298, and Asn-300. Positions 402 to 546 (IGVCHNEMTS…YSTYELENES (145 aa)) are oligomerization domain. Residues 547–929 (VQSNKESILV…ALYKAFEANN (383 aa)) are carbamoyl phosphate synthetic domain. The ATP-grasp 2 domain maps to 671-861 (EKALKELGIP…MAQIATKLIL (191 aa)). The ATP site is built by Arg-707, Ser-746, Ile-748, Glu-752, Gly-777, Val-778, His-779, Ser-780, Gln-820, and Glu-832. The Mg(2+) site is built by Gln-820, Glu-832, and Asn-834. Positions 820, 832, and 834 each coordinate Mn(2+). Residues 930–1058 (SHLSEFGQIV…ESRCFNIEAI (129 aa)) form the MGS-like domain. The segment at 930–1058 (SHLSEFGQIV…ESRCFNIEAI (129 aa)) is allosteric domain.

This sequence belongs to the CarB family. In terms of assembly, composed of two chains; the small (or glutamine) chain promotes the hydrolysis of glutamine to ammonia, which is used by the large (or ammonia) chain to synthesize carbamoyl phosphate. Tetramer of heterodimers (alpha,beta)4. The cofactor is Mg(2+). Mn(2+) is required as a cofactor.

The enzyme catalyses hydrogencarbonate + L-glutamine + 2 ATP + H2O = carbamoyl phosphate + L-glutamate + 2 ADP + phosphate + 2 H(+). It catalyses the reaction hydrogencarbonate + NH4(+) + 2 ATP = carbamoyl phosphate + 2 ADP + phosphate + 2 H(+). Its pathway is amino-acid biosynthesis; L-arginine biosynthesis; carbamoyl phosphate from bicarbonate: step 1/1. It participates in pyrimidine metabolism; UMP biosynthesis via de novo pathway; (S)-dihydroorotate from bicarbonate: step 1/3. Functionally, large subunit of the glutamine-dependent carbamoyl phosphate synthetase (CPSase). CPSase catalyzes the formation of carbamoyl phosphate from the ammonia moiety of glutamine, carbonate, and phosphate donated by ATP, constituting the first step of 2 biosynthetic pathways, one leading to arginine and/or urea and the other to pyrimidine nucleotides. The large subunit (synthetase) binds the substrates ammonia (free or transferred from glutamine from the small subunit), hydrogencarbonate and ATP and carries out an ATP-coupled ligase reaction, activating hydrogencarbonate by forming carboxy phosphate which reacts with ammonia to form carbamoyl phosphate. This Streptococcus pyogenes serotype M5 (strain Manfredo) protein is Carbamoyl phosphate synthase large chain.